The sequence spans 387 residues: Galanin receptor type 2 (387 aa).

The Extracellular portion of the chain corresponds to 1 to 28 (MNVSGCPGAGNASQAGGGGGWHPEAVIV). Residues asparagine 2 and asparagine 11 are each glycosylated (N-linked (GlcNAc...) asparagine). A helical membrane pass occupies residues 29-49 (PLLFALIFLVGTVGNTLVLAV). Over 50 to 60 (LLRGGQAVSTT) the chain is Cytoplasmic. A helical transmembrane segment spans residues 61 to 81 (NLFILNLGVADLCFILCCVPF). At 82 to 99 (QATIYTLDGWVFGSLLCK) the chain is on the extracellular side. A disulfide bridge links cysteine 98 with cysteine 175. The chain crosses the membrane as a helical span at residues 100–121 (AVHFLIFLTMHASSFTLAAVSL). Residues 122-141 (DRYLAIRYPLHSRELRTPRN) are Cytoplasmic-facing. The helical transmembrane segment at 142–162 (ALAAIGLIWGLSLLFSGPYLS) threads the bilayer. At 163–187 (YYRQSQLANLTVCHPAWSAPRRRAM) the chain is on the extracellular side. The helical transmembrane segment at 188–208 (DICTFVFSYLLPVLVLGLTYA) threads the bilayer. At 209 to 237 (RTLRYLWRAVDPVAAGSGARRAKRKVTRM) the chain is on the cytoplasmic side. A helical membrane pass occupies residues 238–258 (ILIVAALFCLCWMPHHALILC). Topologically, residues 259-260 (VW) are extracellular. A helical membrane pass occupies residues 261–281 (FGQFPLTRATYALRILSHLVS). The Cytoplasmic segment spans residues 282–387 (YANSCVNPIV…GDSILTVDVA (106 aa)).

It belongs to the G-protein coupled receptor 1 family. Expressed abundantly within the central nervous system in both hypothalamus and hippocampus. In peripheral tissues, the strongest expression was observed in heart, kidney, liver, and small intestine.

It localises to the cell membrane. Its function is as follows. Receptor for the hormone galanin and GALP. Receptor for the hormone spexin-1. The activity of this receptor is mediated by G proteins that activate the phospholipase C/protein kinase C pathway (via G(q)) and that inhibit adenylyl cyclase (via G(i)). This is Galanin receptor type 2 (GALR2) from Homo sapiens (Human).